A 436-amino-acid polypeptide reads, in one-letter code: Xaa-Arg dipeptidase (436 aa).

This sequence belongs to the peptidase M20A family.

The enzyme catalyses beta-alanyl-L-lysine + H2O = beta-alanine + L-lysine. The catalysed reaction is beta-alanyl-L-ornithine + H2O = beta-alanine + L-ornithine. It carries out the reaction N(2)-(4-aminobutanoyl)-L-lysine + H2O = 4-aminobutanoate + L-lysine. It catalyses the reaction N(2)-(4-aminobutanoyl)-L-ornithine + H2O = 4-aminobutanoate + L-ornithine. The enzyme catalyses N(2)-(4-aminobutanoyl)-L-arginine + H2O = 4-aminobutanoate + L-arginine. In terms of biological role, catalyzes the peptide bond hydrolysis in dipeptides having basic amino acids lysine, ornithine or arginine at C-terminus. Postulated to function in a metabolite repair mechanism by eliminating alternate dipeptide by-products formed during carnosine synthesis. The sequence is that of Xaa-Arg dipeptidase from Homo sapiens (Human).